Consider the following 85-residue polypeptide: Large ribosomal subunit protein bL27 (85 aa).

Residues 1–20 (MATKKAGGSTRNGRDSEAKR) are disordered.

This sequence belongs to the bacterial ribosomal protein bL27 family.

In Pasteurella multocida (strain Pm70), this protein is Large ribosomal subunit protein bL27.